Here is a 75-residue protein sequence, read N- to C-terminus: Beta-defensin 30 (75 aa).

The signal sequence occupies residues 1-22 (MGSLQLTLVLFVLLSYVPPVRS). 3 cysteine pairs are disulfide-bonded: C35–C62, C42–C56, and C46–C63.

The protein belongs to the beta-defensin family.

It is found in the secreted. In terms of biological role, has antibacterial activity. The polypeptide is Beta-defensin 30 (Defb30) (Mus musculus (Mouse)).